The chain runs to 459 residues: MNQNPVEEGQKFPLTIRRMGINGEGIGYFKKAVVFVPGAITGEEVVVEAVKVRDRFTEAKLNKIRKKSPNRVTAPCPVYEACGGCQLQHVAYSAQLELKRDIVIQSIEKHTKIDPTKLKIRPTIGMEDPWRYRNKSQFQTRMVGSGQVETGLFGANSHQLVPIEDCIVQQPVTIKVTNFVRDLLEKYGVPIYDEKAGSGIVRTIVVRTGVKTGETQLVFITNSKKLPKKREMLAEIEAALPEVTSIMQNVNQAKSSLIFGDETFLLAGKESIEEKLMELEFDLSARAFFQLNPFQTERLYQEVEKALVLTGSETLVDAYCGVGTIGQAFAGKVKEVRGMDIIPESIEDAKRNAEKNGIENVYYEVGKAEDVLPKWVKEGFRPDAVIVDPPRSGCDQGLIKSLLDVEAKQLVYVSCNPSTLARDLALLAKKYRIRYMQPVDMFPQTAHVETVVLLQLKDK.

The region spanning proline 5–lysine 63 is the TRAM domain. The [4Fe-4S] cluster site is built by cysteine 76, cysteine 82, cysteine 85, and cysteine 166. S-adenosyl-L-methionine is bound by residues glutamine 290, tyrosine 319, aspartate 340, and aspartate 388. Cysteine 415 serves as the catalytic Nucleophile.

It belongs to the class I-like SAM-binding methyltransferase superfamily. RNA M5U methyltransferase family.

This is an uncharacterized protein from Listeria monocytogenes serovar 1/2a (strain ATCC BAA-679 / EGD-e).